The chain runs to 189 residues: Small ribosomal subunit protein uS7 (189 aa).

Belongs to the universal ribosomal protein uS7 family. Part of the 30S ribosomal subunit.

Functionally, one of the primary rRNA binding proteins, it binds directly to 16S rRNA where it nucleates assembly of the head domain of the 30S subunit. Is located at the subunit interface close to the decoding center. The polypeptide is Small ribosomal subunit protein uS7 (Methanosarcina mazei (strain ATCC BAA-159 / DSM 3647 / Goe1 / Go1 / JCM 11833 / OCM 88) (Methanosarcina frisia)).